Consider the following 157-residue polypeptide: Putative electron transport protein YsaA (157 aa).

4 4Fe-4S ferredoxin-type domains span residues 2–32 (NRFI…NQDC), 48–80 (KDHC…REHG), 80–109 (GHIF…VVSS), and 112–144 (KARA…CMDV). The [4Fe-4S] cluster site is built by cysteine 12, cysteine 15, cysteine 18, cysteine 22, cysteine 58, cysteine 61, cysteine 66, cysteine 70, cysteine 89, cysteine 92, cysteine 95, cysteine 99, cysteine 118, cysteine 121, cysteine 130, and cysteine 134.

The sequence is that of Putative electron transport protein YsaA (ysaA) from Escherichia coli (strain K12).